The chain runs to 569 residues: 3-(3-hydroxy-phenyl)propionate/3-hydroxycinnamic acid hydroxylase (569 aa).

FAD-binding positions include 8 to 37 and 273 to 283; these read DVVI…VVDE and FREGRLMLAGD.

Belongs to the PheA/TfdB FAD monooxygenase family. FAD is required as a cofactor.

It carries out the reaction 3-(3-hydroxyphenyl)propanoate + NADH + O2 + H(+) = 3-(2,3-dihydroxyphenyl)propanoate + NAD(+) + H2O. It catalyses the reaction (2E)-3-(3-hydroxyphenyl)prop-2-enoate + NADH + O2 + H(+) = (2E)-3-(2,3-dihydroxyphenyl)prop-2-enoate + NAD(+) + H2O. It participates in aromatic compound metabolism; 3-phenylpropanoate degradation. Its function is as follows. Catalyzes the insertion of one atom of molecular oxygen into position 2 of the phenyl ring of 3-(3-hydroxyphenyl)propionate (3-HPP) and hydroxycinnamic acid (3HCI). The sequence is that of 3-(3-hydroxy-phenyl)propionate/3-hydroxycinnamic acid hydroxylase from Mycolicibacterium gilvum (strain PYR-GCK) (Mycobacterium gilvum (strain PYR-GCK)).